The sequence spans 1600 residues: Eukaryotic translation initiation factor 4 gamma 1 (1600 aa).

The tract at residues 1 to 88 (MNKAPQPTGP…ARPGPAPHVY (88 aa)) is disordered. Residues 7 to 24 (PTGPPPARSPGLPQPAFP) are compositionally biased toward pro residues. Ser15 is subject to Phosphoserine. Polar residues predominate over residues 34-48 (STPQATQMNTPSQPR). The span at 60–79 (PSRAQPPSSAASRVQSAAPA) shows a compositional bias: low complexity. Residues Arg80 and Arg117 each carry the omega-N-methylarginine modification. Disordered stretches follow at residues 173–230 (NQPP…NGES), 243–326 (SQGA…LSPE), 366–501 (ETHE…QLSQ), 507–526 (AATQ…KELN), and 541–606 (VDPA…DQWK). A PABPC1-binding region spans residues 179–207 (APKRERKTIRIRDPNQGGKDITEEIMSGA). Positions 208 to 220 (RTASTPTPPQTGG) are enriched in polar residues. Thr214 carries the post-translational modification Phosphothreonine. Phosphoserine is present on Ser230. The span at 269–280 (SPSPTPSPPPIL) shows a compositional bias: pro residues. Phosphoserine is present on Ser324. The span at 438-449 (KVSSAALASILS) shows a compositional bias: low complexity. Over residues 463-479 (QEEEMEEDDDDEEGGEA) the composition is skewed to acidic residues. Residues 551 to 562 (QPPTGSNPSPES) show a composition bias toward polar residues. Composition is skewed to basic and acidic residues over residues 578–587 (WDSKEDKIHN) and 596–606 (QKYEYKSDQWK). At Lys606 the chain carries N6-acetyllysine. The segment at 611 to 622 (EEKKRYDREFLL) is EIF4E-binding. Thr651 carries the phosphothreonine modification. Disordered regions lie at residues 667 to 719 (GPDF…TRKI) and 734 to 760 (AEKA…DGSK). Positions 686-1089 (GPPRGGPGGE…GSIDSNNQLF (404 aa)) are eIF3/EIF4A-binding. Omega-N-methylarginine occurs at positions 689 and 698. The span at 697–707 (PRGPAGLGPRR) shows a compositional bias: low complexity. Basic and acidic residues predominate over residues 745-760 (TAADKDRGEEDADGSK). An MIF4G domain is found at 765–993 (FRRVRSILNK…QDVLDLRQSN (229 aa)). Disordered regions lie at residues 1029–1117 (AKGS…SEAT) and 1129–1238 (QQTL…AALS). Residue Ser1032 is modified to Phosphoserine. Omega-N-methylarginine occurs at positions 1036 and 1046. 2 positions are modified to phosphoserine: Ser1081 and Ser1096. An N6-acetyllysine modification is found at Lys1099. Ser1147 and Ser1149 each carry phosphoserine. Positions 1148–1180 (LSRERGEKAGDRGDRLERSERGGDRGDRLDRAR) are enriched in basic and acidic residues. Ser1187 carries the post-translational modification Phosphoserine; by PKC/PRKCA. Residues 1188-1225 (FSKEVEERSRERPSQPEGLRKAASLTEDRGRDPVKREA) are compositionally biased toward basic and acidic residues. Phosphoserine occurs at positions 1189, 1196, and 1211. The residue at position 1213 (Thr1213) is a Phosphothreonine. 2 positions are modified to phosphoserine: Ser1231 and Ser1238. An MI domain is found at 1241–1363 (EVEKKSKAII…PMGELFREIT (123 aa)). One can recognise a W2 domain in the interval 1429 to 1599 (ESEAPGQRTL…REAEDEESDH (171 aa)). Positions 1450 to 1600 (LLKDGGSNQR…EAEDEESDHN (151 aa)) are EIF4A-binding. The tract at residues 1585 to 1600 (FFNWLREAEDEESDHN) is necessary but not sufficient for MKNK1-binding. Position 1597 is a phosphoserine (Ser1597).

Belongs to the eukaryotic initiation factor 4G family. In terms of assembly, eIF4F is a multi-subunit complex, the composition of which varies with external and internal environmental conditions. It is composed of at least EIF4A, EIF4E (cap-binding) and EIF4G1/EIF4G3. Interacts with eIF3 complex, mutually exclusive with EIF4A1 or EIF4A2, EIF4E and through its N-terminus with PABPC1. Interacts with EIF4E or with EIF1 (mutually exclusive) through a common binding site. Interacts through its C-terminus with the serine/threonine kinases MKNK1, and with MKNK2. Appears to act as a scaffold protein, holding these enzymes in place to phosphorylate EIF4E. Non-phosphorylated EIF4EBP1 competes with EIF4G1/EIF4G3 to interact with EIF4E; insulin stimulated MAP-kinase (MAPK1 and MAPK3) phosphorylation of EIF4EBP1 causes dissociation of the complex allowing EIF4G1/EIF4G3 to bind and consequent initiation of translation. EIF4G1/EIF4G3 interacts with PABPC1 to bring about circularization of the mRNA. Interacts with EIF4E3. Interacts with CIRBP and MIF4GD. Interacts with RBM4. Interacts with HNRNPD/AUF1; the interaction requires RNA. Interacts with DDX3X; the interaction requires RNA. Interacts with DAZAP2. As to quaternary structure, (Microbial infection) Interacts with murine norovirus viral genome-linked protein (via C-terminus); this interaction plays a role in translation of viral proteins. In terms of processing, phosphorylated at multiple sites in vivo. Phosphorylation at Ser-1187 by PRKCA induces binding to MKNK1.

The protein localises to the cytoplasm. The protein resides in the nucleus. Its subcellular location is the stress granule. Its function is as follows. Component of the protein complex eIF4F, which is involved in the recognition of the mRNA cap, ATP-dependent unwinding of 5'-terminal secondary structure and recruitment of mRNA to the ribosome. Exists in two complexes, either with EIF1 or with EIF4E (mutually exclusive). Together with EIF1, is required for leaky scanning, in particular for avoiding cap-proximal start codon. Together with EIF4E, antagonizes the scanning promoted by EIF1-EIF4G1 and locates the start codon (through a TISU element) without scanning. As a member of the eIF4F complex, required for endoplasmic reticulum stress-induced ATF4 mRNA translation. The sequence is that of Eukaryotic translation initiation factor 4 gamma 1 (Eif4g1) from Mus musculus (Mouse).